Here is a 140-residue protein sequence, read N- to C-terminus: Type II secretion system core protein G (140 aa).

A propeptide spans 1-6 (MQRQRG) (leader sequence). N-methylphenylalanine is present on Phe-7. Residues 7–27 (FTLLEIMVVIVILGVLASLVV) form a helical membrane-spanning segment. Positions 120-140 (LGPDGVPESNDDIGNWTIGKK) are disordered.

It belongs to the GSP G family. As to quaternary structure, type II secretion system is composed of four main components: the outer membrane complex, the inner membrane complex, the cytoplasmic secretion ATPase and the periplasm-spanning pseudopilus. Forms homomultimers. Post-translationally, cleaved by the prepilin peptidase. Methylated by prepilin peptidase at the amino group of the N-terminal phenylalanine once the leader sequence is cleaved.

The protein localises to the cell inner membrane. In terms of biological role, core component of the type II secretion system required for the energy-dependent secretion of extracellular factors such as proteases and toxins from the periplasm. Pseudopilin (pilin-like) protein that polymerizes to form the pseudopilus. Further polymerization triggers pseudopilus growth. The protein is Type II secretion system core protein G (pulG) of Klebsiella pneumoniae.